Consider the following 177-residue polypeptide: ATP synthase subunit delta (177 aa).

The protein belongs to the ATPase delta chain family. In terms of assembly, F-type ATPases have 2 components, F(1) - the catalytic core - and F(0) - the membrane proton channel. F(1) has five subunits: alpha(3), beta(3), gamma(1), delta(1), epsilon(1). F(0) has three main subunits: a(1), b(2) and c(10-14). The alpha and beta chains form an alternating ring which encloses part of the gamma chain. F(1) is attached to F(0) by a central stalk formed by the gamma and epsilon chains, while a peripheral stalk is formed by the delta and b chains.

The protein resides in the cell membrane. Its function is as follows. F(1)F(0) ATP synthase produces ATP from ADP in the presence of a proton or sodium gradient. F-type ATPases consist of two structural domains, F(1) containing the extramembraneous catalytic core and F(0) containing the membrane proton channel, linked together by a central stalk and a peripheral stalk. During catalysis, ATP synthesis in the catalytic domain of F(1) is coupled via a rotary mechanism of the central stalk subunits to proton translocation. This protein is part of the stalk that links CF(0) to CF(1). It either transmits conformational changes from CF(0) to CF(1) or is implicated in proton conduction. The polypeptide is ATP synthase subunit delta (Streptococcus suis (strain 98HAH33)).